Consider the following 485-residue polypeptide: WD repeat-containing protein 13 (485 aa).

Residue Met-1 is modified to N-acetylmethionine. Phosphoserine is present on residues Ser-70, Ser-74, and Ser-79. Arg-114 carries the post-translational modification Asymmetric dimethylarginine; alternate. Arg-114 is subject to Omega-N-methylarginine; alternate. WD repeat units follow at residues 162–202 (GMYH…LCQL), 208–246 (TVLRVLRGHTRGVSDFAWSLSNDILVSTSLDATMRIWAS), 250–290 (RCIR…VMNI), 295–335 (KVKG…LFDM), 341–389 (TKAK…VVDN), 394–438 (QLKR…FFDV), and 444–482 (AAVNKLQGHSAPVLDVSFNCDESLLASSDASGMVIVWRR).

Widely expressed.

Its subcellular location is the nucleus. The protein is WD repeat-containing protein 13 (WDR13) of Homo sapiens (Human).